A 240-amino-acid chain; its full sequence is Cysteine-rich venom protein ablomin (240 aa).

A signal peptide spans 1–19 (MIVFIVLPILAAVLQQSSG). Residues 38-166 (VDLHNSLRRS…EYSYFYVCQY (129 aa)) enclose the SCP domain. Cystine bridges form between Cys75-Cys153, Cys92-Cys167, Cys148-Cys164, Cys186-Cys193, Cys189-Cys198, Cys202-Cys235, Cys211-Cys229, and Cys220-Cys233. A ShKT domain is found at 202–235 (CTQEDVFTNCNSLVQQSNCQHNYIKTNCPASCFC).

The protein belongs to the CRISP family. Expressed by the venom gland.

It is found in the secreted. Its function is as follows. Blocks contraction of smooth muscle elicited by high potassium-induced depolarization, but does not block caffeine-stimulated contraction. Since high potassium-treatment activates voltage-gated channels and caffeine exposure activates ryanodine receptors, this toxin may target L-type voltage-gated calcium channels (Cav) (and not ryanodine receptors) on smooth muscle. This toxin also shows a little inhibition on cyclic nucleotide-gated CNGA1 channel. This Gloydius blomhoffii (Mamushi) protein is Cysteine-rich venom protein ablomin.